A 331-amino-acid chain; its full sequence is Adenosine deaminase (331 aa).

Residues histidine 12 and histidine 14 each coordinate Zn(2+). Substrate contacts are provided by histidine 14, aspartate 16, and glycine 170. Residue histidine 197 coordinates Zn(2+). Glutamate 200 serves as the catalytic Proton donor. A Zn(2+)-binding site is contributed by aspartate 278. Substrate is bound at residue aspartate 279.

The protein belongs to the metallo-dependent hydrolases superfamily. Adenosine and AMP deaminases family. Adenosine deaminase subfamily. Zn(2+) serves as cofactor.

It catalyses the reaction adenosine + H2O + H(+) = inosine + NH4(+). It carries out the reaction 2'-deoxyadenosine + H2O + H(+) = 2'-deoxyinosine + NH4(+). Its function is as follows. Catalyzes the hydrolytic deamination of adenosine and 2-deoxyadenosine. In Shewanella sp. (strain MR-7), this protein is Adenosine deaminase.